Consider the following 503-residue polypeptide: Probable cytosol aminopeptidase (503 aa).

Residues lysine 274 and aspartate 279 each coordinate Mn(2+). The active site involves lysine 286. Aspartate 297, aspartate 356, and glutamate 358 together coordinate Mn(2+). Arginine 360 is an active-site residue.

This sequence belongs to the peptidase M17 family. Mn(2+) is required as a cofactor.

Its subcellular location is the cytoplasm. The enzyme catalyses Release of an N-terminal amino acid, Xaa-|-Yaa-, in which Xaa is preferably Leu, but may be other amino acids including Pro although not Arg or Lys, and Yaa may be Pro. Amino acid amides and methyl esters are also readily hydrolyzed, but rates on arylamides are exceedingly low.. It catalyses the reaction Release of an N-terminal amino acid, preferentially leucine, but not glutamic or aspartic acids.. In terms of biological role, presumably involved in the processing and regular turnover of intracellular proteins. Catalyzes the removal of unsubstituted N-terminal amino acids from various peptides. This chain is Probable cytosol aminopeptidase, found in Burkholderia mallei (strain SAVP1).